Here is a 795-residue protein sequence, read N- to C-terminus: uncharacterized protein (795 aa).

This is an uncharacterized protein from Methanocaldococcus jannaschii (strain ATCC 43067 / DSM 2661 / JAL-1 / JCM 10045 / NBRC 100440) (Methanococcus jannaschii).